The primary structure comprises 295 residues: 33 kDa chaperonin (295 aa).

2 disulfide bridges follow: Cys-236-Cys-238 and Cys-269-Cys-272.

It belongs to the HSP33 family. Post-translationally, under oxidizing conditions two disulfide bonds are formed involving the reactive cysteines. Under reducing conditions zinc is bound to the reactive cysteines and the protein is inactive.

Its subcellular location is the cytoplasm. Its function is as follows. Redox regulated molecular chaperone. Protects both thermally unfolding and oxidatively damaged proteins from irreversible aggregation. Plays an important role in the bacterial defense system toward oxidative stress. This Citrifermentans bemidjiense (strain ATCC BAA-1014 / DSM 16622 / JCM 12645 / Bem) (Geobacter bemidjiensis) protein is 33 kDa chaperonin.